The chain runs to 267 residues: Indole-3-glycerol phosphate synthase (267 aa).

The protein belongs to the TrpC family.

The enzyme catalyses 1-(2-carboxyphenylamino)-1-deoxy-D-ribulose 5-phosphate + H(+) = (1S,2R)-1-C-(indol-3-yl)glycerol 3-phosphate + CO2 + H2O. It functions in the pathway amino-acid biosynthesis; L-tryptophan biosynthesis; L-tryptophan from chorismate: step 4/5. The chain is Indole-3-glycerol phosphate synthase from Verminephrobacter eiseniae (strain EF01-2).